Consider the following 216-residue polypeptide: Large ribosomal subunit protein uL1 (216 aa).

The protein belongs to the universal ribosomal protein uL1 family.

The polypeptide is Large ribosomal subunit protein uL1 (Caenorhabditis elegans).